The primary structure comprises 212 residues: MKTKIAKHLLQIKAVSLKPDEPFTWASGIKSPIYCDNRLTLSYPEVRHDIAEGLKELILTHFEGAEVIAGTATAGIPHAALAADRLNAPMCYVRSKPKAHGKGNQIEGAVSKGQKVVVVEDLISTGGSVLEVVAALQEAGCDVLGVAAIFTYGLPKATAAFQEKNIPYVTLTDYDTLTDVALELKAIEPSAMNKLKRWRQDPSSESWMEETV.

5-phospho-alpha-D-ribose 1-diphosphate contacts are provided by residues R94, K98, H100, and 120-128; that span reads EDLISTGGS. S124 lines the orotate pocket.

This sequence belongs to the purine/pyrimidine phosphoribosyltransferase family. PyrE subfamily. As to quaternary structure, homodimer. Requires Mg(2+) as cofactor.

It catalyses the reaction orotidine 5'-phosphate + diphosphate = orotate + 5-phospho-alpha-D-ribose 1-diphosphate. The protein operates within pyrimidine metabolism; UMP biosynthesis via de novo pathway; UMP from orotate: step 1/2. Functionally, catalyzes the transfer of a ribosyl phosphate group from 5-phosphoribose 1-diphosphate to orotate, leading to the formation of orotidine monophosphate (OMP). This is Orotate phosphoribosyltransferase from Bacillus pumilus (strain SAFR-032).